The sequence spans 301 residues: Probable alpha-L-glutamate ligase 1 (301 aa).

The region spanning 104-287 is the ATP-grasp domain; the sequence is LQLLSRKGIG…VTEPIVEYIE (184 aa). Residues Lys-141, 178–179, Asp-187, and 211–213 contribute to the ATP site; these read EY and RSN. Mg(2+) is bound by residues Asp-248, Glu-260, and Asn-262. Mn(2+) contacts are provided by Asp-248, Glu-260, and Asn-262.

It belongs to the RimK family. Requires Mg(2+) as cofactor. Mn(2+) serves as cofactor.

This Shewanella oneidensis (strain ATCC 700550 / JCM 31522 / CIP 106686 / LMG 19005 / NCIMB 14063 / MR-1) protein is Probable alpha-L-glutamate ligase 1.